The chain runs to 672 residues: Tubulin--tyrosine ligase-like protein 12 (672 aa).

Positions 332–670 (KIKIFLQIFA…LDEIDPTKVT (339 aa)) constitute a TTL domain. Residues 480-483 (CEYI), lysine 499, and aspartate 501 each bind ATP.

Belongs to the tubulin--tyrosine ligase family.

In terms of biological role, regulates microtubule dynamics in uterine muscle cells. The chain is Tubulin--tyrosine ligase-like protein 12 from Caenorhabditis briggsae.